Here is an 87-residue protein sequence, read N- to C-terminus: uncharacterized protein (87 aa).

A helical membrane pass occupies residues 13-33; sequence LMIVSAVFGGIGIITTIVFVI. The interval 66–87 is disordered; sequence EECGGSTETSSSKPKKKAKKEV. A compositionally biased stretch (basic residues) spans 78–87; the sequence is KPKKKAKKEV.

The protein resides in the membrane. This is an uncharacterized protein from Caenorhabditis elegans.